Reading from the N-terminus, the 388-residue chain is MKELRVYIVRYSEIGLKGKNRKDFEEALRRNIERVTGMKVKRQWGRFLIPIDENVTLDDKLKKIFGIQNFSKGFLVSHDFEEVKKYSLIAVKEKLEKGNYRTFKVQAKKAYKEYKKGVYEINSELGALILKNFKELSVDVRNPDFVLGVEVRPEGVLIFTDRVECYGGLPVGTGGKAVLLLSGGIDSPVAGWYALKRGVLIESVTFVSPPFTSEGAVEKVRDILRVLREFSGGHPLRLHIVNLTKLQLEVKKRVPDKYSLIMYRRSMFRIAEKIAEETGAVAFYTGENIGQVASQTLENLWSIESVTTRPVIRPLSGFDKTEIVEKAKEIGTYEISIKPYQDSCVFFAPKNPATRSHPSILEKLEQQVPDLPVLEEEAFTSRKVEVIE.

The region spanning 55–162 is the THUMP domain; the sequence is VTLDDKLKKI…PEGVLIFTDR (108 aa). ATP-binding positions include 180–181, 205–206, Arg-264, Gly-286, and Gln-295; these read LL and TF.

It belongs to the ThiI family.

It is found in the cytoplasm. It carries out the reaction [ThiI sulfur-carrier protein]-S-sulfanyl-L-cysteine + a uridine in tRNA + 2 reduced [2Fe-2S]-[ferredoxin] + ATP + H(+) = [ThiI sulfur-carrier protein]-L-cysteine + a 4-thiouridine in tRNA + 2 oxidized [2Fe-2S]-[ferredoxin] + AMP + diphosphate. It catalyses the reaction [ThiS sulfur-carrier protein]-C-terminal Gly-Gly-AMP + S-sulfanyl-L-cysteinyl-[cysteine desulfurase] + AH2 = [ThiS sulfur-carrier protein]-C-terminal-Gly-aminoethanethioate + L-cysteinyl-[cysteine desulfurase] + A + AMP + 2 H(+). It participates in cofactor biosynthesis; thiamine diphosphate biosynthesis. In terms of biological role, catalyzes the ATP-dependent transfer of a sulfur to tRNA to produce 4-thiouridine in position 8 of tRNAs, which functions as a near-UV photosensor. Also catalyzes the transfer of sulfur to the sulfur carrier protein ThiS, forming ThiS-thiocarboxylate. This is a step in the synthesis of thiazole, in the thiamine biosynthesis pathway. The sulfur is donated as persulfide by IscS. The polypeptide is Probable tRNA sulfurtransferase (Thermotoga maritima (strain ATCC 43589 / DSM 3109 / JCM 10099 / NBRC 100826 / MSB8)).